Consider the following 259-residue polypeptide: MPGANYRAGAGAGAGARRPRGARDREEDGGGLEPAAVARDLLRGTSNMSFEELLELQSQVGTKTYKQLVAGNSPKKQASRPPIQNACVADKHRPLEMSAKIRVPFLRQVVPISKKVARDPRFDDLSGEYNPEVFDKTYQFLNDIRAKEKELVKKQLKKHLSGEEHEKLQQLLQRMEQQEMAQQERKQQQELHLALKQERRAQAQQGHRPYFLKKSEQRQLALAEKFKELKRSKKLENFLSRKRRRNAGKDRRHLPLSKE.

The segment at 1–38 is disordered; the sequence is MPGANYRAGAGAGAGARRPRGARDREEDGGGLEPAAVA. Serine 73 bears the Phosphoserine mark. Residues 157–205 adopt a coiled-coil conformation; that stretch reads KKHLSGEEHEKLQQLLQRMEQQEMAQQERKQQQELHLALKQERRAQAQQ. The segment at 233-259 is disordered; that stretch reads KKLENFLSRKRRRNAGKDRRHLPLSKE. Residues 240 to 259 are compositionally biased toward basic residues; the sequence is SRKRRRNAGKDRRHLPLSKE. The short motif at 241-244 is the Nuclear localization signal element; it reads RKRR.

The protein belongs to the RRP36 family.

The protein resides in the nucleus. Its subcellular location is the nucleolus. Its function is as follows. Involved in the early processing steps of the pre-rRNA in the maturation pathway leading to the 18S rRNA. This chain is Ribosomal RNA processing protein 36 homolog (RRP36), found in Homo sapiens (Human).